The primary structure comprises 592 residues: A-type ATP synthase subunit A (592 aa).

233 to 240 (GPFGSGKT) serves as a coordination point for ATP.

The protein belongs to the ATPase alpha/beta chains family. In terms of assembly, has multiple subunits with at least A(3), B(3), C, D, E, F, H, I and proteolipid K(x).

The protein resides in the cell membrane. The catalysed reaction is ATP + H2O + 4 H(+)(in) = ADP + phosphate + 5 H(+)(out). Component of the A-type ATP synthase that produces ATP from ADP in the presence of a proton gradient across the membrane. The A chain is the catalytic subunit. In Saccharolobus islandicus (strain Y.G.57.14 / Yellowstone #1) (Sulfolobus islandicus), this protein is A-type ATP synthase subunit A.